The sequence spans 264 residues: Tryptophan synthase alpha chain (264 aa).

Catalysis depends on proton acceptor residues E49 and D60.

The protein belongs to the TrpA family. As to quaternary structure, tetramer of two alpha and two beta chains.

It catalyses the reaction (1S,2R)-1-C-(indol-3-yl)glycerol 3-phosphate + L-serine = D-glyceraldehyde 3-phosphate + L-tryptophan + H2O. Its pathway is amino-acid biosynthesis; L-tryptophan biosynthesis; L-tryptophan from chorismate: step 5/5. Its function is as follows. The alpha subunit is responsible for the aldol cleavage of indoleglycerol phosphate to indole and glyceraldehyde 3-phosphate. The sequence is that of Tryptophan synthase alpha chain from Synechocystis sp. (strain ATCC 27184 / PCC 6803 / Kazusa).